The following is a 947-amino-acid chain: Zinc finger protein 268 (947 aa).

The KRAB domain maps to 81–152; sequence LSFMDVFVDF…QAQVPNQTCP (72 aa). Serine 178 carries the phosphoserine; by TBK1 modification. 24 consecutive C2H2-type zinc fingers follow at residues 276-298, 304-326, 332-354, 360-382, 388-410, 416-438, 444-466, 472-494, 500-522, 528-550, 556-578, 584-606, 612-634, 640-662, 668-690, 696-718, 724-746, 752-774, 780-802, 808-830, 836-858, 864-886, 892-914, and 920-942; these read FGCS…QQTH, YGCN…QRIH, HECS…QRIH, YECC…QKTH, YVCN…ERIH, YECN…QRTH, YVCS…QGIH, YGCI…QRSH, YVCN…TRTH, HECN…QRIH, YECH…QRTH, YECT…QRTH, FECS…QRTH, YSCN…KGVH, YGCS…QRSH, YGCS…MRTH, HECR…QRIH, YECS…QRTH, YECN…ERTH, YKCS…QRMH, YGCN…QRTH, and CKCT…QRTH.

The protein belongs to the krueppel C2H2-type zinc-finger protein family. In terms of assembly, interacts (via the KRAB domain) with TRIM28 (via the RBCC domain); the interaction increases ZNF268 nuclear localization activity. Isoform 2 interacts with CHUK and IKBKB; the interaction is further increased in a TNF-alpha-dependent manner. Interacts with TOLLIP; this interaction is impaired by ZNF268 phosphorylation at Ser-178. Forms a ternary complex with TBK1 and SETD4; the interaction between SETD4 and TBK1 is ZNF268-dependent and leads to TBK1 monomethylation. In terms of processing, phosphorylation at Ser-178 stabilizes the protein by interfering with its binding to TOLLIP, hence impairing its degradation by Tollip-mediated selective autophagy system. Overexpressed in ovarian cancer tissues compared to normal ovarian tissues. Isoform 1 and isoform 2 are expressed in squamous epithelium tissues. Isoform 2 is overexpressed in squamous cervical cancer (at protein level). Expressed in blood cells. Isoform 1 is expressed in pancreas, lung, skeletal muscle, heart, placenta, liver, kidney and brain. Isoform 2 expressed in chronic lymphocytic leukemia (CLL) and several tumor cell lines. Isoform 3 is expressed in several tumor cells. Isoform 5 is expressed in fetal liver and several tumor cells. Isoform 6 is weakly expressed in brain, lung amd small intestin and in several tumor cells. Isoform 7 is expressed in fetal liver and several tumor cells.

Its subcellular location is the nucleus. It is found in the cytoplasm. Its function is as follows. Acts as a transcriptional repressor. Inhibits erythroid differentiation and tumor cell proliferation. Plays a role during ovarian cancer development and progression. In terms of biological role, contributes to cervical carcinogenesis in part through the TNF-alpha-induced NF-kappa-B signaling pathway by interacting with the I-kappa-B-kinase (IKK) core complex. Functionally, involved in the regulation of antiviral interferon signaling. During viral infection, recruits SETD4 to TBK1, leading to TBK1 monomethylation, which is critical for the assembly of TBK1 complex and IRF3 signaling. In Homo sapiens (Human), this protein is Zinc finger protein 268 (ZNF268).